The sequence spans 415 residues: tRNA(Ile2) 2-agmatinylcytidine synthetase TiaS (415 aa).

The protein belongs to the TiaS family.

Its subcellular location is the cytoplasm. The catalysed reaction is cytidine(34) in tRNA(Ile2) + agmatine + ATP + H2O = 2-agmatinylcytidine(34) in tRNA(Ile2) + AMP + 2 phosphate + 2 H(+). Functionally, ATP-dependent agmatine transferase that catalyzes the formation of 2-agmatinylcytidine (agm2C) at the wobble position (C34) of tRNA(Ile2), converting the codon specificity from AUG to AUA. The protein is tRNA(Ile2) 2-agmatinylcytidine synthetase TiaS of Pyrobaculum neutrophilum (strain DSM 2338 / JCM 9278 / NBRC 100436 / V24Sta) (Thermoproteus neutrophilus).